We begin with the raw amino-acid sequence, 206 residues long: MARGKFITFEGIDGAGKTTHLQWFCDRLQERLGPTGRHVVVTREPGGTQLGETLREILLNQPMDLETEALLMFAGRREHLALVIEPALARGDWVVSDRFTDATFAYQGGGRGLPRDKLEALERWVQGGFQPDLTVLFDVQPQVASARRGAVRMPDKFESESDAFFARTRAEYLRRAHEAPHRFAIVDSSESIPQIRKQLEGVLAAL.

11-18 provides a ligand contact to ATP; that stretch reads GIDGAGKT.

It belongs to the thymidylate kinase family.

The catalysed reaction is dTMP + ATP = dTDP + ADP. In terms of biological role, phosphorylation of dTMP to form dTDP in both de novo and salvage pathways of dTTP synthesis. This is Thymidylate kinase from Burkholderia mallei (strain NCTC 10247).